A 214-amino-acid polypeptide reads, in one-letter code: Thiamine-phosphate synthase (214 aa).

4-amino-2-methyl-5-(diphosphooxymethyl)pyrimidine-binding positions include 37-41 (QLRDK) and asparagine 69. Positions 70 and 89 each coordinate Mg(2+). Serine 108 contributes to the 4-amino-2-methyl-5-(diphosphooxymethyl)pyrimidine binding site. Residue 134-136 (TDS) coordinates 2-[(2R,5Z)-2-carboxy-4-methylthiazol-5(2H)-ylidene]ethyl phosphate. Residue lysine 137 participates in 4-amino-2-methyl-5-(diphosphooxymethyl)pyrimidine binding. 2-[(2R,5Z)-2-carboxy-4-methylthiazol-5(2H)-ylidene]ethyl phosphate contacts are provided by residues glycine 167 and 187 to 188 (IS).

The protein belongs to the thiamine-phosphate synthase family. The cofactor is Mg(2+).

The catalysed reaction is 2-[(2R,5Z)-2-carboxy-4-methylthiazol-5(2H)-ylidene]ethyl phosphate + 4-amino-2-methyl-5-(diphosphooxymethyl)pyrimidine + 2 H(+) = thiamine phosphate + CO2 + diphosphate. It carries out the reaction 2-(2-carboxy-4-methylthiazol-5-yl)ethyl phosphate + 4-amino-2-methyl-5-(diphosphooxymethyl)pyrimidine + 2 H(+) = thiamine phosphate + CO2 + diphosphate. It catalyses the reaction 4-methyl-5-(2-phosphooxyethyl)-thiazole + 4-amino-2-methyl-5-(diphosphooxymethyl)pyrimidine + H(+) = thiamine phosphate + diphosphate. It participates in cofactor biosynthesis; thiamine diphosphate biosynthesis; thiamine phosphate from 4-amino-2-methyl-5-diphosphomethylpyrimidine and 4-methyl-5-(2-phosphoethyl)-thiazole: step 1/1. Functionally, condenses 4-methyl-5-(beta-hydroxyethyl)thiazole monophosphate (THZ-P) and 2-methyl-4-amino-5-hydroxymethyl pyrimidine pyrophosphate (HMP-PP) to form thiamine monophosphate (TMP). This Natronomonas pharaonis (strain ATCC 35678 / DSM 2160 / CIP 103997 / JCM 8858 / NBRC 14720 / NCIMB 2260 / Gabara) (Halobacterium pharaonis) protein is Thiamine-phosphate synthase.